The primary structure comprises 388 residues: GTPase Obg (388 aa).

In terms of domain architecture, Obg spans 1 to 159 (MKFVDEAVIR…RSLKLELLLL (159 aa)). Positions 160–333 (ADVGLLGMPN…LAAKLWDFIQ (174 aa)) constitute an OBG-type G domain. GTP contacts are provided by residues 166-173 (GMPNAGKS), 191-195 (FTTLV), 213-216 (DIPG), 283-286 (NKAD), and 314-316 (SAY). Residues Ser173 and Thr193 each coordinate Mg(2+).

The protein belongs to the TRAFAC class OBG-HflX-like GTPase superfamily. OBG GTPase family. Monomer. Requires Mg(2+) as cofactor.

It is found in the cytoplasm. Functionally, an essential GTPase which binds GTP, GDP and possibly (p)ppGpp with moderate affinity, with high nucleotide exchange rates and a fairly low GTP hydrolysis rate. Plays a role in control of the cell cycle, stress response, ribosome biogenesis and in those bacteria that undergo differentiation, in morphogenesis control. The protein is GTPase Obg of Shewanella oneidensis (strain ATCC 700550 / JCM 31522 / CIP 106686 / LMG 19005 / NCIMB 14063 / MR-1).